Consider the following 259-residue polypeptide: UPF0246 protein NMCC_0856 (259 aa).

It belongs to the UPF0246 family.

The chain is UPF0246 protein NMCC_0856 from Neisseria meningitidis serogroup C (strain 053442).